The primary structure comprises 3013 residues: DmX-like protein 1 (3013 aa).

WD repeat units lie at residues 108-145 (FLDSIAHNITWDPAGNRLLTGSSCLQLWCNSRKQTEDE), 164-204 (KTAS…RPAV), and 227-275 (AHPR…NDCF). Phosphoserine occurs at positions 322, 420, 423, and 434. The disordered stretch occupies residues 418–442 (PSSEASVEDSIQADLKSDEELDDGV). One copy of the WD 4 repeat lies at 474 to 514 (DHQIEVLLSEWSKNADMLFSIHPMDGSLLVWHVDWLDEYQP). Position 572 is a phosphoserine (S572). WD repeat units follow at residues 578-619 (AHSK…ESAF) and 842-893 (KKRL…TPVS). Residues S916 and S922 each carry the phosphoserine modification. 3 WD repeats span residues 970-1008 (HLSSSSIYPVCSAPYLLATSCSDDKVRFWRCRVTNGESA), 1145-1193 (EDGS…PLSK), and 1208-1248 (GAPP…EPVI). Phosphoserine is present on residues S1829, S1896, S1903, and S1965. 2 disordered regions span residues 2364 to 2406 (GQAN…PPAV) and 2431 to 2462 (QSRAEYDSEESLESDDEEEEDDDDALPSGLQL). Low complexity predominate over residues 2385 to 2398 (SKVSARESPVSSSS). A compositionally biased stretch (acidic residues) spans 2437–2455 (DSEESLESDDEEEEDDDDA). WD repeat units follow at residues 2728–2769 (KAIN…TCFR), 2771–2810 (GGNSRITRMRFNYQGNKFGIVDADGYLSLYQTNWKCCPVT), 2822–2864 (CHNK…ANSL), 2870–2909 (CHDSGATVLAYAPKHQLLISGGRKGFTCIFDLRQRQQRQL), 2912–2951 (SHDSPVKAIAIDPTEEYFVTGSAEGNIKIWSLSSFSLLHT), and 2964–3002 (NIGTGVMQIETGPANHIFSCGADGTMKMRILPDQFSPLN).

This chain is DmX-like protein 1 (Dmxl1), found in Mus musculus (Mouse).